The following is a 295-amino-acid chain: sn-glycerol-3-phosphate transport system permease protein UgpA (295 aa).

Residues 1-11 (MSSSRPVFRSR) are Cytoplasmic-facing. A helical membrane pass occupies residues 12–32 (WLPYLLVAPQLIITVIFFIWP). The Periplasmic segment spans residues 33 to 80 (AGEALWYSLQSVDPFGFSSQFVGLDNFVTLFHDSYYLDAFWTTIKFST). The ABC transmembrane type-1 domain occupies 76–284 (IKFSTFVTVS…FLVIVLTVVQ (209 aa)). The helical transmembrane segment at 81–101 (FVTVSGLLVSLFFAALVEYIV) threads the bilayer. At 102-109 (RGSRFYQT) the chain is on the cytoplasmic side. A helical membrane pass occupies residues 110–130 (LMLLPYAVAPAVAAVLWIFLF). The Periplasmic segment spans residues 131-156 (NPGRGLITHFLAEFGYDWNHAQNSGQ). The chain crosses the membrane as a helical span at residues 157–177 (AMFLVVFASVWKQISYNFLFF). Residues 178-207 (YAALQSIPRSLIEAAAIDGAGPIRRFFKIA) are Cytoplasmic-facing. A helical membrane pass occupies residues 208-228 (LPLIAPVSFFLLVVNLVYAFF). Topologically, residues 229–262 (DTFPVIDAATSGGPVQATTTLIYKIYREGFTGLD) are periplasmic. The chain crosses the membrane as a helical span at residues 263–283 (LASSAAQSVVLMFLVIVLTVV). Topologically, residues 284–295 (QFRYVESKVRYQ) are cytoplasmic.

This sequence belongs to the binding-protein-dependent transport system permease family. UgpAE subfamily. The complex is composed of two ATP-binding proteins (UgpC), two transmembrane proteins (UgpA and UgpE) and a solute-binding protein (UgpB).

The protein localises to the cell inner membrane. Part of the ABC transporter complex UgpBAEC involved in sn-glycerol-3-phosphate (G3P) import. Probably responsible for the translocation of the substrate across the membrane. The protein is sn-glycerol-3-phosphate transport system permease protein UgpA (ugpA) of Escherichia coli (strain UTI89 / UPEC).